A 435-amino-acid chain; its full sequence is Enolase (435 aa).

Q163 provides a ligand contact to (2R)-2-phosphoglycerate. E205 serves as the catalytic Proton donor. Mg(2+) contacts are provided by D243, E292, and D319. Positions 344, 373, 374, and 395 each coordinate (2R)-2-phosphoglycerate. K344 serves as the catalytic Proton acceptor.

This sequence belongs to the enolase family. Mg(2+) serves as cofactor.

The protein localises to the cytoplasm. The protein resides in the secreted. Its subcellular location is the cell surface. The enzyme catalyses (2R)-2-phosphoglycerate = phosphoenolpyruvate + H2O. The protein operates within carbohydrate degradation; glycolysis; pyruvate from D-glyceraldehyde 3-phosphate: step 4/5. Catalyzes the reversible conversion of 2-phosphoglycerate (2-PG) into phosphoenolpyruvate (PEP). It is essential for the degradation of carbohydrates via glycolysis. The sequence is that of Enolase from Streptococcus suis (strain 98HAH33).